The sequence spans 200 residues: UPF0301 protein BR0480/BS1330_I0481 (200 aa).

It belongs to the UPF0301 (AlgH) family.

The protein is UPF0301 protein BR0480/BS1330_I0481 of Brucella suis biovar 1 (strain 1330).